Reading from the N-terminus, the 689-residue chain is Glycine--tRNA ligase beta subunit (689 aa).

It belongs to the class-II aminoacyl-tRNA synthetase family. In terms of assembly, tetramer of two alpha and two beta subunits.

It localises to the cytoplasm. It carries out the reaction tRNA(Gly) + glycine + ATP = glycyl-tRNA(Gly) + AMP + diphosphate. This is Glycine--tRNA ligase beta subunit from Serratia proteamaculans (strain 568).